The chain runs to 60 residues: Large ribosomal subunit protein uL30 (60 aa).

This sequence belongs to the universal ribosomal protein uL30 family. Part of the 50S ribosomal subunit.

The chain is Large ribosomal subunit protein uL30 from Cutibacterium acnes (strain DSM 16379 / KPA171202) (Propionibacterium acnes).